The sequence spans 665 residues: UvrABC system protein C (665 aa).

Positions 16–95 (ESPGVYRFRD…IKQYDPRFNV (80 aa)) constitute a GIY-YIG domain. The 36-residue stretch at 208 to 243 (DLMVRRLEREMADASAELEFERAARLRDDLAALRRA) folds into the UVR domain. Residues 470-507 (EAGVESAGDPATPAGPASTGPGVPDEPRVGTLVDPTTG) are disordered. Low complexity predominate over residues 475-491 (SAGDPATPAGPASTGPG).

The protein belongs to the UvrC family. As to quaternary structure, interacts with UvrB in an incision complex.

It localises to the cytoplasm. The UvrABC repair system catalyzes the recognition and processing of DNA lesions. UvrC both incises the 5' and 3' sides of the lesion. The N-terminal half is responsible for the 3' incision and the C-terminal half is responsible for the 5' incision. This is UvrABC system protein C from Salinispora tropica (strain ATCC BAA-916 / DSM 44818 / JCM 13857 / NBRC 105044 / CNB-440).